A 233-amino-acid polypeptide reads, in one-letter code: Ion-translocating oxidoreductase complex subunit E (233 aa).

Transmembrane regions (helical) follow at residues 18–38 (ALVQ…ATNA), 39–59 (LGLG…VSAL), 69–89 (IPIY…LINA), 92–112 (FGLY…CIVI), 128–148 (ALDG…LGAL), and 182–202 (PFLL…LLAG).

Belongs to the NqrDE/RnfAE family. As to quaternary structure, the complex is composed of six subunits: RnfA, RnfB, RnfC, RnfD, RnfE and RnfG.

It localises to the cell inner membrane. Part of a membrane-bound complex that couples electron transfer with translocation of ions across the membrane. The sequence is that of Ion-translocating oxidoreductase complex subunit E from Yersinia pseudotuberculosis serotype IB (strain PB1/+).